The sequence spans 335 residues: DNA-directed RNA polymerase subunit alpha (335 aa).

The interval 1–233 (MIRDEISVSI…DLFIPFLHGE (233 aa)) is alpha N-terminal domain (alpha-NTD). The interval 264 to 335 (KEKIAFQLIF…KLFAIDPPRN (72 aa)) is alpha C-terminal domain (alpha-CTD).

It belongs to the RNA polymerase alpha chain family. In terms of assembly, in plastids the minimal PEP RNA polymerase catalytic core is composed of four subunits: alpha, beta, beta', and beta''. When a (nuclear-encoded) sigma factor is associated with the core the holoenzyme is formed, which can initiate transcription.

The protein resides in the plastid. The protein localises to the chloroplast. The catalysed reaction is RNA(n) + a ribonucleoside 5'-triphosphate = RNA(n+1) + diphosphate. DNA-dependent RNA polymerase catalyzes the transcription of DNA into RNA using the four ribonucleoside triphosphates as substrates. In Pinus thunbergii (Japanese black pine), this protein is DNA-directed RNA polymerase subunit alpha.